A 90-amino-acid chain; its full sequence is YcgL domain-containing protein YpsIP31758_2009 (90 aa).

Residues 1–85 (MLCAIYRSPK…PPESLLKMHL (85 aa)) enclose the YcgL domain.

This is YcgL domain-containing protein YpsIP31758_2009 from Yersinia pseudotuberculosis serotype O:1b (strain IP 31758).